The sequence spans 44 residues: Thymosin beta (44 aa).

Residues 1–17 (MSDKPDVKEVESFDKTT) are compositionally biased toward basic and acidic residues. The segment at 1–44 (MSDKPDVKEVESFDKTTLKKTTTNEKNTLPTKEVIEQEKSGGSD) is disordered. Over residues 19-32 (KKTTTNEKNTLPTK) the composition is skewed to low complexity. The span at 33–44 (EVIEQEKSGGSD) shows a compositional bias: basic and acidic residues.

Belongs to the thymosin beta family.

The protein resides in the cytoplasm. It is found in the cytoskeleton. In terms of biological role, plays an important role in the organization of the cytoskeleton. Binds to and sequesters actin monomers (G actin) and therefore inhibits actin polymerization. The polypeptide is Thymosin beta (Gillichthys mirabilis (Long-jawed mudsucker)).